A 177-amino-acid chain; its full sequence is Interleukin-19 (177 aa).

The first 24 residues, 1 to 24 (MKLQCVSLWLLGTILILCSVDNHG), serve as a signal peptide directing secretion. 3 disulfide bridges follow: Cys-28–Cys-121, Cys-75–Cys-127, and Cys-76–Cys-129. Asn-56 is a glycosylation site (N-linked (GlcNAc...) asparagine). Asn-135 carries an N-linked (GlcNAc...) asparagine glycan.

This sequence belongs to the IL-10 family.

Its subcellular location is the secreted. Its function is as follows. Cytokine that functions as an anti-inflammatory and proangiogenic factor. Polarizes adaptive immunity to an anti-inflammatory phenotype through induction of T-helper 2 responses by both down-regulation of IFN-gamma and up-regulation of IL4 and IL13. Produced by osteocytes, stimulates granulopoiesis and neutrophil formation. Exerts its biological effect through a receptor complex consisting of a heterodimer of IL20RA and IL20RB. In turn, activates the Janus kinase (JAK) and signal transducer and activator of transcription (STAT) pathway, and importantly, STAT3. The polypeptide is Interleukin-19 (IL19) (Homo sapiens (Human)).